Here is a 77-residue protein sequence, read N- to C-terminus: Acyl carrier protein (77 aa).

One can recognise a Carrier domain in the interval 1-76 (MAVFDEVKDV…DVVNYIDGLK (76 aa)). At Ser-36 the chain carries O-(pantetheine 4'-phosphoryl)serine.

The protein belongs to the acyl carrier protein (ACP) family. 4'-phosphopantetheine is transferred from CoA to a specific serine of apo-ACP by AcpS. This modification is essential for activity because fatty acids are bound in thioester linkage to the sulfhydryl of the prosthetic group.

The protein localises to the cytoplasm. Its pathway is lipid metabolism; fatty acid biosynthesis. In terms of biological role, carrier of the growing fatty acid chain in fatty acid biosynthesis. The sequence is that of Acyl carrier protein from Campylobacter fetus subsp. fetus (strain 82-40).